Reading from the N-terminus, the 741-residue chain is ABC transporter D family member 2 (741 aa).

3 helical membrane passes run 39 to 59, 119 to 139, and 260 to 280; these read GSLGKKVFILLALGGGAFSLV, FLSLLYLTALLFARTMLSVSI, and VVVMGWGSPLLMFSYFIVSGF. The ABC transmembrane type-1 domain maps to 131-409; that stretch reads ARTMLSVSIA…LMVALSQAIG (279 aa). In terms of domain architecture, ABC transporter spans 518 to 740; the sequence is IKFENVSIVS…DDDHLKKPLS (223 aa). ATP is bound at residue 551 to 558; that stretch reads GPNGSGKS.

It belongs to the ABC transporter superfamily. ABCD family. Peroxisomal fatty acyl CoA transporter (TC 3.A.1.203) subfamily.

The protein resides in the membrane. In Dictyostelium discoideum (Social amoeba), this protein is ABC transporter D family member 2 (abcD2).